The primary structure comprises 219 residues: Probable nicotinate-nucleotide adenylyltransferase (219 aa).

The protein belongs to the NadD family.

The enzyme catalyses nicotinate beta-D-ribonucleotide + ATP + H(+) = deamido-NAD(+) + diphosphate. The protein operates within cofactor biosynthesis; NAD(+) biosynthesis; deamido-NAD(+) from nicotinate D-ribonucleotide: step 1/1. Functionally, catalyzes the reversible adenylation of nicotinate mononucleotide (NaMN) to nicotinic acid adenine dinucleotide (NaAD). In Pseudomonas putida (strain GB-1), this protein is Probable nicotinate-nucleotide adenylyltransferase.